The primary structure comprises 84 residues: Putative protein BCE-1 (84 aa).

This Homo sapiens (Human) protein is Putative protein BCE-1 (BCE1).